The chain runs to 94 residues: UPF0235 protein TON_0641 (94 aa).

The protein belongs to the UPF0235 family.

The sequence is that of UPF0235 protein TON_0641 from Thermococcus onnurineus (strain NA1).